The sequence spans 164 residues: Endoribonuclease YbeY (164 aa).

H117, H121, and H127 together coordinate Zn(2+).

Belongs to the endoribonuclease YbeY family. Zn(2+) serves as cofactor.

The protein resides in the cytoplasm. Functionally, single strand-specific metallo-endoribonuclease involved in late-stage 70S ribosome quality control and in maturation of the 3' terminus of the 16S rRNA. The chain is Endoribonuclease YbeY from Mycoplasma mycoides subsp. mycoides SC (strain CCUG 32753 / NCTC 10114 / PG1).